The following is a 121-amino-acid chain: Large ribosomal subunit protein uL22 (121 aa).

This sequence belongs to the universal ribosomal protein uL22 family. In terms of assembly, part of the 50S ribosomal subunit.

This protein binds specifically to 23S rRNA; its binding is stimulated by other ribosomal proteins, e.g. L4, L17, and L20. It is important during the early stages of 50S assembly. It makes multiple contacts with different domains of the 23S rRNA in the assembled 50S subunit and ribosome. In terms of biological role, the globular domain of the protein is located near the polypeptide exit tunnel on the outside of the subunit, while an extended beta-hairpin is found that lines the wall of the exit tunnel in the center of the 70S ribosome. The protein is Large ribosomal subunit protein uL22 of Pseudarthrobacter chlorophenolicus (strain ATCC 700700 / DSM 12829 / CIP 107037 / JCM 12360 / KCTC 9906 / NCIMB 13794 / A6) (Arthrobacter chlorophenolicus).